Consider the following 435-residue polypeptide: Putrescine transporter PotE (435 aa).

The next 12 membrane-spanning stretches (helical) occupy residues 8 to 28 (IGVV…GIIM), 39 to 59 (ISIV…YAFA), 95 to 115 (LVIA…ELFG), 117 to 137 (ILSP…ATVL), 148 to 168 (ISSF…IIGW), 185 to 205 (VPTF…FLGL), 224 to 244 (IAVL…TNVI), 275 to 295 (VIMG…QFTI), 320 to 340 (APVV…LMTI), 354 to 374 (LAVV…AVLL), 386 to 406 (TTVF…YAAG), and 409 to 429 (AMLY…FVSY).

The protein belongs to the amino acid-polyamine-organocation (APC) superfamily. Basic amino acid/polyamine antiporter (APA) (TC 2.A.3.2) family.

The protein localises to the cell inner membrane. The catalysed reaction is putrescine(in) + H(+)(in) = putrescine(out) + H(+)(out). It catalyses the reaction putrescine(in) + L-ornithine(out) = putrescine(out) + L-ornithine(in). Catalyzes both the uptake and excretion of putrescine. The uptake of putrescine is dependent on the membrane potential and the excretion involves putrescine-ornithine antiporter activity. The protein is Putrescine transporter PotE of Haemophilus influenzae (strain ATCC 51907 / DSM 11121 / KW20 / Rd).